Consider the following 103-residue polypeptide: NADH-quinone oxidoreductase subunit K (103 aa).

3 consecutive transmembrane segments (helical) span residues threonine 7–valine 27, leucine 31–valine 51, and phenylalanine 65–leucine 85.

It belongs to the complex I subunit 4L family. In terms of assembly, NDH-1 is composed of 14 different subunits. Subunits NuoA, H, J, K, L, M, N constitute the membrane sector of the complex.

It is found in the cell inner membrane. The catalysed reaction is a quinone + NADH + 5 H(+)(in) = a quinol + NAD(+) + 4 H(+)(out). In terms of biological role, NDH-1 shuttles electrons from NADH, via FMN and iron-sulfur (Fe-S) centers, to quinones in the respiratory chain. The immediate electron acceptor for the enzyme in this species is believed to be ubiquinone. Couples the redox reaction to proton translocation (for every two electrons transferred, four hydrogen ions are translocated across the cytoplasmic membrane), and thus conserves the redox energy in a proton gradient. This chain is NADH-quinone oxidoreductase subunit K, found in Nitrosococcus oceani (strain ATCC 19707 / BCRC 17464 / JCM 30415 / NCIMB 11848 / C-107).